The primary structure comprises 308 residues: Protoheme IX farnesyltransferase (308 aa).

8 consecutive transmembrane segments (helical) span residues 31 to 51 (VIEL…RGTV), 53 to 73 (PLLI…ANTL), 102 to 122 (HALI…WLST), 124 to 144 (LLSG…YTML), 149 to 169 (TSQN…IGWS), 170 to 190 (AVTG…FFWT), 242 to 262 (LATG…FLVM), and 288 to 308 (YLAV…PTLL).

This sequence belongs to the UbiA prenyltransferase family. Protoheme IX farnesyltransferase subfamily.

It is found in the cell membrane. The catalysed reaction is heme b + (2E,6E)-farnesyl diphosphate + H2O = Fe(II)-heme o + diphosphate. Its pathway is porphyrin-containing compound metabolism; heme O biosynthesis; heme O from protoheme: step 1/1. Functionally, converts heme B (protoheme IX) to heme O by substitution of the vinyl group on carbon 2 of heme B porphyrin ring with a hydroxyethyl farnesyl side group. The sequence is that of Protoheme IX farnesyltransferase from Mycolicibacterium smegmatis (strain ATCC 700084 / mc(2)155) (Mycobacterium smegmatis).